The chain runs to 54 residues: Ovomucoid (54 aa).

The region spanning 4-54 (VDCSDYPKPVCTLDYMPLCGSDNKTYSNKCNFCNAVVDSNGTITLSHFGRC) is the Kazal-like domain. 3 disulfides stabilise this stretch: cysteine 6-cysteine 36, cysteine 14-cysteine 33, and cysteine 22-cysteine 54. Residue asparagine 43 is glycosylated (N-linked (GlcNAc...) asparagine).

The protein localises to the secreted. This is Ovomucoid from Coloeus monedula (Eurasian jackdaw).